The primary structure comprises 360 residues: Putative FBD-associated F-box protein At5g56430 (360 aa).

Residues 1-53 form the F-box domain; the sequence is MRNISDLPNDLLVKILSLIPIKVAASTSLLSKRWGSVWKLIPTLDYDGTYSAA. Kelch repeat units lie at residues 140–186 and 235–285; these read IRYT…EQLD and VMCS…SVPE. One can recognise an FBD domain in the interval 276-326; the sequence is KWEQPNSVPECLLVSLETVKWILYKGTQEEKDVVKYLLKNGNFIKTMSIRF.

The polypeptide is Putative FBD-associated F-box protein At5g56430 (Arabidopsis thaliana (Mouse-ear cress)).